The following is a 138-amino-acid chain: ATP synthase epsilon chain (138 aa).

This sequence belongs to the ATPase epsilon chain family. In terms of assembly, F-type ATPases have 2 components, CF(1) - the catalytic core - and CF(0) - the membrane proton channel. CF(1) has five subunits: alpha(3), beta(3), gamma(1), delta(1), epsilon(1). CF(0) has three main subunits: a, b and c.

Its subcellular location is the cellular thylakoid membrane. Functionally, produces ATP from ADP in the presence of a proton gradient across the membrane. The sequence is that of ATP synthase epsilon chain from Microcystis aeruginosa (strain NIES-843 / IAM M-2473).